The chain runs to 508 residues: Putative inorganic phosphate transporter 1-13 (508 aa).

Topologically, residues 1–22 (MAGNQQLRVLHALDIARTQLYH) are cytoplasmic. The chain crosses the membrane as a helical span at residues 23–43 (FIAIVIAGMGFFTDAYDLFSI). The Extracellular portion of the chain corresponds to 44–64 (SLVADLLGHVYYHGELPRNIH). The chain crosses the membrane as a helical span at residues 65–85 (AAVTGIALCGTVPGQLVFGWL). The Cytoplasmic portion of the chain corresponds to 86–93 (GDKMGRKR). A helical transmembrane segment spans residues 94-114 (VYGITLLLMVVSSLASGLSFS). Residues 115–117 (KHE) lie on the Extracellular side of the membrane. The helical transmembrane segment at 118-138 (GMNIIAVLCFFRFWLGVSIGG) threads the bilayer. Residues 139-159 (DYPLSATIMSEYANKRTRGAF) are Cytoplasmic-facing. The chain crosses the membrane as a helical span at residues 160–180 (IAAVFAMQGFGNLAAGIIGMI). The Extracellular segment spans residues 181–192 (VSAAFKHSSASK). A helical transmembrane segment spans residues 193 to 213 (IDYAWRIILMFGAIPAALTYH). Topologically, residues 214 to 277 (WRMKMPETAR…FEFLHRHGLH (64 aa)) are cytoplasmic. Residues 278–298 (LLGTTVCWFVLDVTFYSLNIF) form a helical membrane-spanning segment. The Extracellular portion of the chain corresponds to 299 to 328 (MKNIFTEVGLLPRLDSEYHHTLQRMITMTA). A helical membrane pass occupies residues 329-349 (VHTFISLCGALPGYFFTVAFV). Over 350 to 354 (DRIGR) the chain is Cytoplasmic. A helical transmembrane segment spans residues 355-375 (VKIQLIGFTMMTVFMLCLAIP). Over 376-389 (YDQWLRHKNKYGFA) the chain is Extracellular. The chain crosses the membrane as a helical span at residues 390–410 (VMYGLTFFFANFGPNTTTFII). Topologically, residues 411–424 (PAEIFPARLRSTCH) are cytoplasmic. Residues 425 to 445 (GISGAVGKIGAIVGVFGFLYT) traverse the membrane as a helical segment. At 446–450 (EYHIR) the chain is on the extracellular side. A helical transmembrane segment spans residues 451 to 471 (IFLFVLIGCNLVGFIFTLLLP). At 472 to 508 (ESKGKSLEDLTGEIEEFQEEDEGSEVALSRPIHTVPL) the chain is on the cytoplasmic side.

Belongs to the major facilitator superfamily. Phosphate:H(+) symporter (TC 2.A.1.9) family.

It is found in the membrane. Functionally, high-affinity transporter for external inorganic phosphate. The polypeptide is Putative inorganic phosphate transporter 1-13 (PHT1-13) (Oryza sativa subsp. japonica (Rice)).